Here is a 244-residue protein sequence, read N- to C-terminus: Small ribosomal subunit protein eS4 (244 aa).

Positions 43 to 108 (LPLLLIVRDI…NYRVLFDRKG (66 aa)) constitute an S4 RNA-binding domain.

It belongs to the eukaryotic ribosomal protein eS4 family.

The chain is Small ribosomal subunit protein eS4 (rps4e) from Methanocaldococcus jannaschii (strain ATCC 43067 / DSM 2661 / JAL-1 / JCM 10045 / NBRC 100440) (Methanococcus jannaschii).